A 221-amino-acid polypeptide reads, in one-letter code: MAFVKSGWLLRQSTILKRWKKNWFDLWSDGHLIYYDDQTRQSIEDKVHMPVDCINIRTGHECRDIQPPDGKPRDCLLQIVCRDGKTISLCAESTDDCLAWKFTLQDSRTNTAYVGSAILSEETAVAASPPPYAAYATPTPEVYGYGPYSGAYPAGTQVVYAANGQAYAVPYQYPYAGVYGQQPANQVIIRERYRDNDSDLALGMLAGAATGMALGSLFWVF.

A PH domain is found at 2–109 (AFVKSGWLLR…WKFTLQDSRT (108 aa)). An a 1,2-diacyl-sn-glycero-3-phospho-L-serine-binding site is contributed by Lys20.

As to expression, highly expressed in brain, retina, heart and kidney. Detected at lower levels in lung, muscle and nerve.

It is found in the recycling endosome membrane. Functionally, involved in retrograde transport of recycling endosomes. This chain is Pleckstrin homology domain-containing family B member 2 (Plekhb2), found in Mus musculus (Mouse).